The primary structure comprises 881 residues: Receptor-like protein 41 (881 aa).

The signal sequence occupies residues Met1 to Pro21. Topologically, residues Ser22–Glu844 are extracellular. N-linked (GlcNAc...) asparagine glycans are attached at residues Asn58, Asn70, Asn91, Asn109, and Asn145. LRR repeat units follow at residues Phe97 to Met121, Leu122 to Asn145, Leu146 to Leu169, Arg170 to Leu195, His197 to Asn219, Leu220 to Leu244, Thr245 to Leu267, Thr268 to Met291, Phe293 to Ser317, Leu319 to Leu340, Asn342 to Ser364, Phe365 to Ser390, Leu391 to Ser412, Leu413 to Leu437, Arg439 to Asn462, and Ser463 to Ile486. The N-linked (GlcNAc...) asparagine glycan is linked to Asn189. Residues Asn243 and Asn266 are each glycosylated (N-linked (GlcNAc...) asparagine). 2 N-linked (GlcNAc...) asparagine glycosylation sites follow: Asn305 and Asn312. Asn402 is a glycosylation site (N-linked (GlcNAc...) asparagine). N-linked (GlcNAc...) asparagine glycosylation is present at Asn462. Residues Ile487–Asn506 form an LRR 17; degenerate repeat. Residues Asn506 and Asn519 are each glycosylated (N-linked (GlcNAc...) asparagine). 10 LRR repeats span residues Arg507 to Leu528, Ser529 to Asp552, Pro554 to Cys576, Ala578 to Val599, Leu600 to Ser624, Phe627 to Asn651, Thr701 to Leu724, Lys725 to Leu748, Val749 to Leu772, and Phe774 to Gly797. Asn575 carries N-linked (GlcNAc...) asparagine glycosylation. Asn731 carries N-linked (GlcNAc...) asparagine glycosylation. Asn779 carries an N-linked (GlcNAc...) asparagine glycan. Residues Gly845 to Ala865 form a helical membrane-spanning segment. The Cytoplasmic portion of the chain corresponds to Ser866–Arg881.

The protein belongs to the RLP family.

Its subcellular location is the cell membrane. In terms of biological role, may be involved in ABA-induced senescence responses. In Arabidopsis thaliana (Mouse-ear cress), this protein is Receptor-like protein 41.